The sequence spans 155 residues: Putative protein p31 (155 aa).

This chain is Putative protein p31 (31), found in Acyrthosiphon pisum secondary endosymbiont phage 1 (Bacteriophage APSE-1).